Reading from the N-terminus, the 72-residue chain is Protein kish-A (72 aa).

Residues 1-26 (MSAIFNFQSLLTVILLLICTCAYIRS) form the signal peptide. The Extracellular portion of the chain corresponds to 27–53 (LTPSLLDKNKTGFLGIFWKCARIGERK). N-linked (GlcNAc...) asparagine glycosylation occurs at N35. The helical transmembrane segment at 54-71 (SPYVAFCCIVMALTILFS) threads the bilayer. Residue E72 is a topological domain, cytoplasmic.

This sequence belongs to the KISH family.

The protein localises to the golgi apparatus membrane. In terms of biological role, involved in the early part of the secretory pathway. This Danio rerio (Zebrafish) protein is Protein kish-A (tmem167a).